A 575-amino-acid polypeptide reads, in one-letter code: Cytochrome P450 monooxygenase opaB (575 aa).

The N-linked (GlcNAc...) asparagine glycan is linked to N6. Residues 37–57 (FILAAILASIILLIIRNSMLS) traverse the membrane as a helical segment. N83 and N242 each carry an N-linked (GlcNAc...) asparagine glycan. C521 is a heme binding site.

It belongs to the cytochrome P450 family. It depends on heme as a cofactor.

It is found in the membrane. It functions in the pathway secondary metabolite biosynthesis. Its function is as follows. Cytochrome P450 monooxygenase; part of the gene cluster that mediates the biosynthesis of oxepinamides, derivatives of anthranilyl-containing tripeptides that share an oxepin ring and a fused pyrimidinone moiety. The nonribosomal peptide synthetase (NRPS) opaA assembles the quinazolinone core with D-Phe incorporation. The first adenylation domain (A1) of opaA loads and activates anthranilic acid whereas the second A domain (A2) is for activating of L-Phe, which is then converted to D-form by the E domain. The third A domain (A3) is responsible for L-Ile activation and the terminal condensation domain C3 for cyclization and releasing the NRPS product protuboxepin K. The cytochrome P450 monooxygenase opaB then catalyzes alone the oxepin ring formation to convert protuboxepin K into protuboxepin A. The flavoenzyme opaC installs subsequently one hydroxyl group at the oxepin ring, accompanied by double bond migration, to form 15-epi-oxepinamide E. The epimerase opaE changes the D-Phe residue back to L-form, leading to oxepinamide E, which is further methylated at the hydroxyl group at C-12 by the O-methyltransferase OpaF to yield oxepinamide F. The chain is Cytochrome P450 monooxygenase opaB from Aspergillus ustus.